Consider the following 146-residue polypeptide: Snaclec 1 (146 aa).

A signal peptide spans M1–A23. Intrachain disulfides connect C25–C36, C53–C142, and C119–C134. Positions Y32–K143 constitute a C-type lectin domain.

The protein belongs to the snaclec family. As to quaternary structure, heterodimer; disulfide-linked. Expressed by the venom gland.

It localises to the secreted. In terms of biological role, interferes with one step of hemostasis (modulation of platelet aggregation, or coagulation cascade, for example). This Bitis arietans (African puff adder) protein is Snaclec 1.